The sequence spans 114 residues: T cell receptor beta variable 10-2 (114 aa).

Positions 1-21 are cleaved as a signal peptide; the sequence is MGTRLFFYVALCLLWAGHRDA. One can recognise an Ig-like domain in the interval 22–114; the sequence is GITQSPRYKI…TSVYFCASSE (93 aa). The cysteines at positions 42 and 110 are disulfide-linked.

As to quaternary structure, alpha-beta TR is a heterodimer composed of an alpha and beta chain; disulfide-linked. The alpha-beta TR is associated with the transmembrane signaling CD3 coreceptor proteins to form the TR-CD3 (TcR or TCR). The assembly of alpha-beta TR heterodimers with CD3 occurs in the endoplasmic reticulum where a single alpha-beta TR heterodimer associates with one CD3D-CD3E heterodimer, one CD3G-CD3E heterodimer and one CD247 homodimer forming a stable octameric structure. CD3D-CD3E and CD3G-CD3E heterodimers preferentially associate with TR alpha and TR beta chains, respectively. The association of the CD247 homodimer is the last step of TcR assembly in the endoplasmic reticulum and is required for transport to the cell surface.

Its subcellular location is the cell membrane. Its function is as follows. V region of the variable domain of T cell receptor (TR) beta chain that participates in the antigen recognition. Alpha-beta T cell receptors are antigen specific receptors which are essential to the immune response and are present on the cell surface of T lymphocytes. Recognize peptide-major histocompatibility (MH) (pMH) complexes that are displayed by antigen presenting cells (APC), a prerequisite for efficient T cell adaptive immunity against pathogens. Binding of alpha-beta TR to pMH complex initiates TR-CD3 clustering on the cell surface and intracellular activation of LCK that phosphorylates the ITAM motifs of CD3G, CD3D, CD3E and CD247 enabling the recruitment of ZAP70. In turn ZAP70 phosphorylates LAT, which recruits numerous signaling molecules to form the LAT signalosome. The LAT signalosome propagates signal branching to three major signaling pathways, the calcium, the mitogen-activated protein kinase (MAPK) kinase and the nuclear factor NF-kappa-B (NF-kB) pathways, leading to the mobilization of transcription factors that are critical for gene expression and essential for T cell growth and differentiation. The T cell repertoire is generated in the thymus, by V-(D)-J rearrangement. This repertoire is then shaped by intrathymic selection events to generate a peripheral T cell pool of self-MH restricted, non-autoaggressive T cells. Post-thymic interaction of alpha-beta TR with the pMH complexes shapes TR structural and functional avidity. The chain is T cell receptor beta variable 10-2 from Homo sapiens (Human).